The sequence spans 117 residues: Large ribosomal subunit protein uL18 (117 aa).

The protein belongs to the universal ribosomal protein uL18 family. In terms of assembly, part of the 50S ribosomal subunit; part of the 5S rRNA/L5/L18/L25 subcomplex. Contacts the 5S and 23S rRNAs.

Functionally, this is one of the proteins that bind and probably mediate the attachment of the 5S RNA into the large ribosomal subunit, where it forms part of the central protuberance. This chain is Large ribosomal subunit protein uL18, found in Blochmanniella floridana.